The following is a 1253-amino-acid chain: Elongator complex protein 1 (1253 aa).

Residues 830–1253 (VDVNMLFDHA…KPFEKLSILI (424 aa)) form a mediates dimerization region. Polar residues predominate over residues 1126–1141 (YTKSSNSSKMTRNTSK). The segment at 1126 to 1153 (YTKSSNSSKMTRNTSKNNRRLERKRARG) is disordered. The segment at 1137-1155 (RNTSKNNRRLERKRARGKK) is required for binding to tRNA. Over residues 1142–1153 (NNRRLERKRARG) the composition is skewed to basic residues.

Belongs to the ELP1/IKA1 family. In terms of assembly, homodimer. Component of the elongator complex.

It is found in the cytoplasm. It participates in tRNA modification; 5-methoxycarbonylmethyl-2-thiouridine-tRNA biosynthesis. Component of the elongator complex, a multiprotein complex which is required for multiple tRNA modifications, including mcm5U (5-methoxycarbonylmethyl uridine), mcm5s2U (5-methoxycarbonylmethyl-2-thiouridine), and ncm5U (5-carbamoylmethyl uridine). The elongator complex catalyzes formation of carboxymethyluridine in the wobble base at position 34 in tRNAs. ELP1 binds to tRNA, mediating interaction of the elongator complex with tRNA. This Schizosaccharomyces pombe (strain 972 / ATCC 24843) (Fission yeast) protein is Elongator complex protein 1.